We begin with the raw amino-acid sequence, 344 residues long: Phenylalanine--tRNA ligase alpha subunit (344 aa).

Residue Glu-256 participates in Mg(2+) binding.

This sequence belongs to the class-II aminoacyl-tRNA synthetase family. Phe-tRNA synthetase alpha subunit type 1 subfamily. As to quaternary structure, tetramer of two alpha and two beta subunits. The cofactor is Mg(2+).

Its subcellular location is the cytoplasm. It carries out the reaction tRNA(Phe) + L-phenylalanine + ATP = L-phenylalanyl-tRNA(Phe) + AMP + diphosphate + H(+). The chain is Phenylalanine--tRNA ligase alpha subunit from Onion yellows phytoplasma (strain OY-M).